A 137-amino-acid polypeptide reads, in one-letter code: Small ribosomal subunit protein uS11 (137 aa).

Polar residues predominate over residues 1-10; it reads MPPKSRSTGP. Disordered stretches follow at residues 1–27 and 116–137; these read MPPK…IPHG and GTIS…RRRV. Residues 12–21 are compositionally biased toward basic residues; the sequence is KTQKTRRRDK.

It belongs to the universal ribosomal protein uS11 family. In terms of assembly, part of the 30S ribosomal subunit. Interacts with proteins S7 and S18. Binds to IF-3.

Located on the platform of the 30S subunit, it bridges several disparate RNA helices of the 16S rRNA. Forms part of the Shine-Dalgarno cleft in the 70S ribosome. The sequence is that of Small ribosomal subunit protein uS11 from Rhodococcus erythropolis (strain PR4 / NBRC 100887).